The primary structure comprises 74 residues: Putative defensin-like protein 27 (74 aa).

The N-terminal stretch at 1–19 is a signal peptide; it reads MVHPRFVFFAFLALSVLLA. 4 disulfides stabilise this stretch: cysteine 36/cysteine 74, cysteine 46/cysteine 65, cysteine 51/cysteine 70, and cysteine 55/cysteine 72.

Belongs to the DEFL family.

The protein localises to the secreted. In Arabidopsis thaliana (Mouse-ear cress), this protein is Putative defensin-like protein 27.